The primary structure comprises 354 residues: Arginase-2, mitochondrial (354 aa).

A mitochondrion-targeting transit peptide spans 1–22; sequence MSLRGSLSRLLQTRVHSILKKS. The Mn(2+) site is built by H120, D143, H145, and D147. Residues 145-149, 156-158, and D202 contribute to the substrate site; these read HADIN and SGN. Residues D251 and D253 each contribute to the Mn(2+) site. Substrate-binding residues include T265 and E296. The interval 334–354 is disordered; the sequence is YDQLPTPSSPDESENQARVRI.

This sequence belongs to the arginase family. In terms of assembly, homotrimer. The cofactor is Mn(2+). In terms of tissue distribution, expressed most strongly in kidney and prostate, much less strongly in the brain, skeletal muscle, placenta, lung, mammary gland, macrophage, uterus, testis and gut, but apparently not in the liver, heart and pancreas. Expressed in activated T cells.

It localises to the mitochondrion. It carries out the reaction L-arginine + H2O = urea + L-ornithine. Its pathway is nitrogen metabolism; urea cycle; L-ornithine and urea from L-arginine: step 1/1. May play a role in the regulation of extra-urea cycle arginine metabolism and also in down-regulation of nitric oxide synthesis. Extrahepatic arginase functions to regulate L-arginine bioavailability to nitric oxid synthase (NOS). Arginine metabolism is a critical regulator of innate and adaptive immune responses. Seems to be involved in negative regulation of the survival capacity of activated CD4(+) and CD8(+) T cells. May suppress inflammation-related signaling in asthmatic airway epithelium. May contribute to the immune evasion of H.pylori by restricting M1 macrophage activation and polyamine metabolism. In fetal dendritic cells may play a role in promoting immune suppression and T cell TNF-alpha production during gestation. Regulates RPS6KB1 signaling, which promotes endothelial cell senescence and inflammation and implicates NOS3/eNOS dysfunction. Can inhibit endothelial autophagy independently of its enzymatic activity implicating mTORC2 signaling. Involved in vascular smooth muscle cell senescence and apoptosis independently of its enzymatic activity. Since NOS is found in the penile corpus cavernosum smooth muscle, the clitoral corpus cavernosum and the vagina, arginase-2 plays a role in both male and female sexual arousal. The chain is Arginase-2, mitochondrial (ARG2) from Homo sapiens (Human).